The primary structure comprises 149 residues: Large-conductance mechanosensitive channel (149 aa).

3 consecutive transmembrane segments (helical) span residues 10–30, 41–61, and 87–107; these read FALKGNVMDLAVGVIIGGAFA, IMPIVAFIVGGEINFKNMFLI, and GSFITVLINFLILAFIIFMMV.

It belongs to the MscL family. In terms of assembly, homopentamer.

It localises to the cell inner membrane. Functionally, channel that opens in response to stretch forces in the membrane lipid bilayer. May participate in the regulation of osmotic pressure changes within the cell. This chain is Large-conductance mechanosensitive channel, found in Psychrobacter cryohalolentis (strain ATCC BAA-1226 / DSM 17306 / VKM B-2378 / K5).